We begin with the raw amino-acid sequence, 482 residues long: Dual specificity protein phosphatase 10 (482 aa).

A Rhodanese domain is found at 168 to 285 (PSQGPVIIDC…FKQNHENLCD (118 aa)). The segment at 199–215 (KISRRRLQQGKITVLDL) is interaction with MAP kinases. The 144-residue stretch at 321–464 (ELTPILPFLF…LLEFEEDLNN (144 aa)) folds into the Tyrosine-protein phosphatase domain. Cys-408 functions as the Phosphocysteine intermediate in the catalytic mechanism.

It belongs to the protein-tyrosine phosphatase family. Non-receptor class dual specificity subfamily. Monomer. Interacts with MAPK14.

It is found in the cytoplasm. It localises to the nucleus. It catalyses the reaction O-phospho-L-tyrosyl-[protein] + H2O = L-tyrosyl-[protein] + phosphate. The catalysed reaction is O-phospho-L-seryl-[protein] + H2O = L-seryl-[protein] + phosphate. The enzyme catalyses O-phospho-L-threonyl-[protein] + H2O = L-threonyl-[protein] + phosphate. Protein phosphatase involved in the inactivation of MAP kinases. Has a specificity for the MAPK11/MAPK12/MAPK13/MAPK14 subfamily. It preferably dephosphorylates p38. The sequence is that of Dual specificity protein phosphatase 10 (DUSP10) from Bos taurus (Bovine).